We begin with the raw amino-acid sequence, 220 residues long: IQ domain-containing protein F3 (220 aa).

Basic and acidic residues predominate over residues 1–22; that stretch reads MELDQDQKVETPEAAENGKDEM. Residues 1-81 are disordered; sequence MELDQDQKVE…KQIQDEKTGI (81 aa). A compositionally biased stretch (acidic residues) spans 23–50; the sequence is QLEEQTQDEDTTETETETETETEAEAEG. Residues 69–93 adopt a coiled-coil conformation; that stretch reads QAEKQIQDEKTGIKEADRAIQEQTQ. Residues 146-175 enclose the IQ domain; sequence AELAGVKIQAWWRGTLVRRTLLLAILSAWT.

In Rattus norvegicus (Rat), this protein is IQ domain-containing protein F3 (Iqcf3).